A 207-amino-acid chain; its full sequence is Ribosomal RNA small subunit methyltransferase G (207 aa).

Residues glycine 74, leucine 79, valine 125–glutamate 126, and arginine 140 each bind S-adenosyl-L-methionine.

Belongs to the methyltransferase superfamily. RNA methyltransferase RsmG family.

It localises to the cytoplasm. It carries out the reaction guanosine(527) in 16S rRNA + S-adenosyl-L-methionine = N(7)-methylguanosine(527) in 16S rRNA + S-adenosyl-L-homocysteine. Its function is as follows. Specifically methylates the N7 position of guanine in position 527 of 16S rRNA. This is Ribosomal RNA small subunit methyltransferase G from Shewanella halifaxensis (strain HAW-EB4).